Here is an 884-residue protein sequence, read N- to C-terminus: MAKIRIFELARSLNMTNPDLLDRLKEMGIEAKSHLSSLEDDIVEKVRQGVFRTEVEKPEKVEQKRVRSNVIRKRRQPVKSEAEPEAEAPAAQAPEAEEVTAPTAEEAVPEEAADADVSAKAETPTAPETPEEAEISVSEEAPVEEAADQVPPTDEAVDPAEAAPAEEESSPSRKKAKAKKHQAAKIIKFPDAPQRLSNKGVLEVVDDTAPADSPAAPAAATPAGEKDKKPSRKDRKKRGKTESVETEEAVPVKKKGVFKRKEIVEGVALYDRTRGRMRKKGKGGAKVPGGAKTQITTPKAIKRKVRINESISVAELAKRMGVKASEVIARLMGMGVMATLNQQVDFDSAALVAAEFEYEVEKASATEEELLELNVEEDQGNLKKRAPVVTIMGHVDHGKTSLLDVIRQSRITEGEAGGITQHIGAYKVNTANGEVVFLDTPGHEAFTAMRARGARATDIVILVVAADDGIMPQTIEAINHSRAAGVPIVVAVNKIDKEGADPDRVKREASDHGLVPEDWGGDTMFVNVSAKQKLGISDLLDMVLLQAEMLELKANPDKKARGVVIEAKLDPGRGPVATVLIHEGTLSVGETVVCGIHYGKIRAMFDDKGAPLDQAGPATPVELIGLGGVATSGDDLFAVGDEKSAKTVSENRQQKQRTEDLARKDSISLENFFEKMQEKEEKVLNIIIKADVNGSCEAIADSLQKFSSGEVKIHVVHSAPGTIIESDVTLASASNAIVLGFNVRPSPKVRALAAEENVDIRSYDIIYDLIDDIKKALTGMMSSTFEEEVLGRAEVRELFVIPKKGTIAGSYVLDGKIERGRPARLLRDGVIAYNGVIGSLRRHKDDAKEVASGYECGIGIENYNDIKPGDVIECYFLREIKPEL.

Positions 58–248 (PEKVEQKRVR…GKTESVETEE (191 aa)) are disordered. A compositionally biased stretch (basic residues) spans 66–77 (VRSNVIRKRRQP). Residues 87–106 (EAPAAQAPEAEEVTAPTAEE) show a composition bias toward low complexity. Residues 172–183 (SRKKAKAKKHQA) are compositionally biased toward basic residues. Residues 207–223 (DTAPADSPAAPAAATPA) are compositionally biased toward low complexity. Basic residues predominate over residues 229–239 (KPSRKDRKKRG). Residues 384–553 (KRAPVVTIMG…LLQAEMLELK (170 aa)) enclose the tr-type G domain. Residues 393–400 (GHVDHGKT) form a G1 region. 393–400 (GHVDHGKT) provides a ligand contact to GTP. Positions 418 to 422 (GITQH) are G2. Residues 439–442 (DTPG) form a G3 region. GTP-binding positions include 439 to 443 (DTPGH) and 493 to 496 (NKID). The segment at 493 to 496 (NKID) is G4. The G5 stretch occupies residues 529-531 (SAK).

Belongs to the TRAFAC class translation factor GTPase superfamily. Classic translation factor GTPase family. IF-2 subfamily.

It is found in the cytoplasm. Its function is as follows. One of the essential components for the initiation of protein synthesis. Protects formylmethionyl-tRNA from spontaneous hydrolysis and promotes its binding to the 30S ribosomal subunits. Also involved in the hydrolysis of GTP during the formation of the 70S ribosomal complex. The sequence is that of Translation initiation factor IF-2 from Desulfosudis oleivorans (strain DSM 6200 / JCM 39069 / Hxd3) (Desulfococcus oleovorans).